The chain runs to 88 residues: Cell division topological specificity factor (88 aa).

The protein belongs to the MinE family.

In terms of biological role, prevents the cell division inhibition by proteins MinC and MinD at internal division sites while permitting inhibition at polar sites. This ensures cell division at the proper site by restricting the formation of a division septum at the midpoint of the long axis of the cell. The chain is Cell division topological specificity factor from Salmonella agona (strain SL483).